A 72-amino-acid polypeptide reads, in one-letter code: Translation initiation factor IF-1 (72 aa).

An S1-like domain is found at 1 to 72; it reads MAKTDLLEVQ…ERGRIVFRHK (72 aa).

The protein belongs to the IF-1 family. Component of the 30S ribosomal translation pre-initiation complex which assembles on the 30S ribosome in the order IF-2 and IF-3, IF-1 and N-formylmethionyl-tRNA(fMet); mRNA recruitment can occur at any time during PIC assembly.

Its subcellular location is the cytoplasm. Functionally, one of the essential components for the initiation of protein synthesis. Stabilizes the binding of IF-2 and IF-3 on the 30S subunit to which N-formylmethionyl-tRNA(fMet) subsequently binds. Helps modulate mRNA selection, yielding the 30S pre-initiation complex (PIC). Upon addition of the 50S ribosomal subunit IF-1, IF-2 and IF-3 are released leaving the mature 70S translation initiation complex. This Spiroplasma kunkelii protein is Translation initiation factor IF-1.